The sequence spans 65 residues: Large ribosomal subunit protein bL35 (65 aa).

Belongs to the bacterial ribosomal protein bL35 family.

The protein is Large ribosomal subunit protein bL35 of Enterobacter sp. (strain 638).